Reading from the N-terminus, the 344-residue chain is L-rhamnose-proton symporter (344 aa).

Helical transmembrane passes span 4-24, 38-58, 68-88, 101-121, 137-157, 175-195, 214-234, 259-279, 290-310, and 323-343; these read AITMGIFWHLIGAASAACFYA, WSVGGIVSWIILPWTISALLL, FSLSTLLPVFLFGAMWGIGNI, MGIGIAIGITLIVGTLMTPII, TLLGVLVALIGVGIVTRAGQL, LVLAVMCGIFSAGMSFAMNAA, LPSYVVIMGGGAIINLGFCFI, VLLSALGGLMWYLQFFFYAWG, ISWMLHMSFYVLCGGIVGLVL, and VLSLGCVVIIVAANIVGIGMA.

Belongs to the L-rhamnose transporter (TC 2.A.7.6) family.

Its subcellular location is the cell inner membrane. It catalyses the reaction L-rhamnopyranose(in) + H(+)(in) = L-rhamnopyranose(out) + H(+)(out). Its function is as follows. Uptake of L-rhamnose across the cytoplasmic membrane with the concomitant transport of protons into the cell (symport system). The chain is L-rhamnose-proton symporter from Shigella sonnei (strain Ss046).